We begin with the raw amino-acid sequence, 904 residues long: Shieldin complex subunit 2 (904 aa).

The sufficient for interaction with SHLD3 and MAD2L2 stretch occupies residues 1–60 (MSGGSQVHIFWGAPVAPLKMTVSQDTASLMSVADPWKKIHLLYSQHSLYLKDEKQHKNLE). An interaction with ASTE1 region spans residues 1–568 (MSGGSQVHIF…AYVSSKHSYL (568 aa)). The interval 721–891 (KCSGVVLIQA…LQQDFSLLDF (171 aa)) is mediates interaction with SHLD1.

It belongs to the SHLD2 family. Component of the shieldin complex, consisting of SHLD1, SHLD2, SHLD3 and MAD2L2/REV7. Within the complex, SHLD2 forms a scaffold which interacts with a SHLD3-MAD2L2 subcomplex via its N-terminus, and with SHLD1 via its C-terminus. Interacts with TP53BP1. Interacts with RIF1. Interacts with ASTE1.

Its subcellular location is the chromosome. Its function is as follows. Component of the shieldin complex, which plays an important role in repair of DNA double-stranded breaks (DSBs). During G1 and S phase of the cell cycle, the complex functions downstream of TP53BP1 to promote non-homologous end joining (NHEJ) and suppress DNA end resection. Mediates various NHEJ-dependent processes including immunoglobulin class-switch recombination, and fusion of unprotected telomeres. In Pongo abelii (Sumatran orangutan), this protein is Shieldin complex subunit 2.